A 224-amino-acid chain; its full sequence is UPF0111 protein TC_0063 (224 aa).

The protein belongs to the UPF0111 family.

The polypeptide is UPF0111 protein TC_0063 (Chlamydia muridarum (strain MoPn / Nigg)).